An 876-amino-acid chain; its full sequence is Paramyosin (876 aa).

Residues 1 to 28 form a nonhelical region region; it reads MSARSAKFMYRSGNAGASGDLSVEYGTD. A coiled-coil region spans residues 29–855; sequence LGALTRLEDK…IRAKHRSWVT (827 aa). The interval 856 to 876 is nonhelical region; sequence TSQVPGGTRQVFVTQEEQSNY.

This sequence belongs to the paramyosin family. As to quaternary structure, homodimer.

It is found in the cytoplasm. It localises to the myofibril. Its function is as follows. Paramyosin is a major structural component of many thick filaments isolated from invertebrate muscles. This chain is Paramyosin, found in Sarcoptes scabiei (Itch mite).